Consider the following 528-residue polypeptide: Benzoylformate decarboxylase (528 aa).

Residues asparagine 117, leucine 118, and arginine 120 each contribute to the Mg(2+) site. The tract at residues 377–460 (TSTTAQMWQR…VIMNNGTYGA (84 aa)) is thiamine pyrophosphate binding. The Ca(2+) site is built by aspartate 428, asparagine 455, and threonine 457.

The protein belongs to the TPP enzyme family. Homotetramer. The cofactor is Ca(2+). Thiamine diphosphate is required as a cofactor. It depends on Mg(2+) as a cofactor.

It catalyses the reaction phenylglyoxylate + H(+) = benzaldehyde + CO2. Its pathway is aromatic compound metabolism; (R)-mandelate degradation; benzoate from (R)-mandelate: step 3/4. This chain is Benzoylformate decarboxylase (mdlC), found in Pseudomonas putida (Arthrobacter siderocapsulatus).